The following is a 239-amino-acid chain: ATP-dependent dethiobiotin synthetase BioD (239 aa).

Residue 15–20 participates in ATP binding; it reads EIGKTF. Thr19 lines the Mg(2+) pocket. Lys40 is an active-site residue. Residues Asp57, 118-121, and 178-179 contribute to the ATP site; these read EGAG and NH. Residues Asp57 and Glu118 each coordinate Mg(2+).

The protein belongs to the dethiobiotin synthetase family. As to quaternary structure, homodimer. Mg(2+) serves as cofactor.

Its subcellular location is the cytoplasm. The enzyme catalyses (7R,8S)-7,8-diammoniononanoate + CO2 + ATP = (4R,5S)-dethiobiotin + ADP + phosphate + 3 H(+). Its pathway is cofactor biosynthesis; biotin biosynthesis; biotin from 7,8-diaminononanoate: step 1/2. Catalyzes a mechanistically unusual reaction, the ATP-dependent insertion of CO2 between the N7 and N8 nitrogen atoms of 7,8-diaminopelargonic acid (DAPA, also called 7,8-diammoniononanoate) to form a ureido ring. This chain is ATP-dependent dethiobiotin synthetase BioD, found in Burkholderia lata (strain ATCC 17760 / DSM 23089 / LMG 22485 / NCIMB 9086 / R18194 / 383).